A 93-amino-acid chain; its full sequence is Small ribosomal subunit protein uS19 (93 aa).

The protein belongs to the universal ribosomal protein uS19 family.

Protein S19 forms a complex with S13 that binds strongly to the 16S ribosomal RNA. This Mycobacterium marinum (strain ATCC BAA-535 / M) protein is Small ribosomal subunit protein uS19.